The sequence spans 197 residues: HTH-type transcriptional regulator BetI (197 aa).

An HTH tetR-type domain is found at Pro8 to Leu68. A DNA-binding region (H-T-H motif) is located at residues Ser31 to Phe50.

Its pathway is amine and polyamine biosynthesis; betaine biosynthesis via choline pathway [regulation]. Functionally, repressor involved in the biosynthesis of the osmoprotectant glycine betaine. It represses transcription of the choline transporter BetT and the genes of BetAB involved in the synthesis of glycine betaine. The protein is HTH-type transcriptional regulator BetI of Pseudomonas fluorescens (strain Pf0-1).